Consider the following 240-residue polypeptide: Uridylate kinase (240 aa).

12 to 15 (KLSG) is an ATP binding site. The involved in allosteric activation by GTP stretch occupies residues 20-25 (GEKGFG). Gly54 is a UMP binding site. Residues Gly55 and Arg59 each coordinate ATP. UMP contacts are provided by residues Asp74 and 135–142 (TGSPYFST). Residues Asn163, Tyr169, and Asp172 each contribute to the ATP site.

It belongs to the UMP kinase family. Homohexamer.

The protein resides in the cytoplasm. The enzyme catalyses UMP + ATP = UDP + ADP. It functions in the pathway pyrimidine metabolism; CTP biosynthesis via de novo pathway; UDP from UMP (UMPK route): step 1/1. Its activity is regulated as follows. Allosterically activated by GTP. Inhibited by UTP. Catalyzes the reversible phosphorylation of UMP to UDP. This Lactiplantibacillus plantarum (strain ATCC BAA-793 / NCIMB 8826 / WCFS1) (Lactobacillus plantarum) protein is Uridylate kinase.